The chain runs to 243 residues: Small ribosomal subunit protein uS3 (243 aa).

Residues 39–110 (IRTFIEKKYG…QVRINVVEVE (72 aa)) form the KH type-2 domain. Residues 216-243 (QTIPVGANPKRKASRRPQQFEDRSNENS) form a disordered region. The segment covering 233 to 243 (QQFEDRSNENS) has biased composition (basic and acidic residues).

Belongs to the universal ribosomal protein uS3 family. In terms of assembly, part of the 30S ribosomal subunit. Forms a tight complex with proteins S10 and S14.

Its function is as follows. Binds the lower part of the 30S subunit head. Binds mRNA in the 70S ribosome, positioning it for translation. This chain is Small ribosomal subunit protein uS3, found in Prochlorococcus marinus (strain MIT 9215).